A 678-amino-acid polypeptide reads, in one-letter code: DNA ligase (678 aa).

NAD(+)-binding positions include 36 to 40, 85 to 86, and E117; these read DVVYD and SL. K119 acts as the N6-AMP-lysine intermediate in catalysis. NAD(+)-binding residues include R140, E177, K294, and K318. Zn(2+) contacts are provided by C412, C415, C430, and C435. Residues 598 to 678 form the BRCT domain; that stretch reads ISSTPLAGKT…QLLKMINPQE (81 aa).

This sequence belongs to the NAD-dependent DNA ligase family. LigA subfamily. Mg(2+) serves as cofactor. Mn(2+) is required as a cofactor.

The enzyme catalyses NAD(+) + (deoxyribonucleotide)n-3'-hydroxyl + 5'-phospho-(deoxyribonucleotide)m = (deoxyribonucleotide)n+m + AMP + beta-nicotinamide D-nucleotide.. Functionally, DNA ligase that catalyzes the formation of phosphodiester linkages between 5'-phosphoryl and 3'-hydroxyl groups in double-stranded DNA using NAD as a coenzyme and as the energy source for the reaction. It is essential for DNA replication and repair of damaged DNA. This is DNA ligase from Gloeothece citriformis (strain PCC 7424) (Cyanothece sp. (strain PCC 7424)).